Here is a 497-residue protein sequence, read N- to C-terminus: Glycerol kinase (497 aa).

Residue Thr12 coordinates ADP. Residues Thr12, Thr13, and Ser14 each coordinate ATP. Sn-glycerol 3-phosphate is bound at residue Thr12. Arg16 provides a ligand contact to ADP. Arg82, Glu83, Tyr134, and Asp243 together coordinate sn-glycerol 3-phosphate. Residues Arg82, Glu83, Tyr134, Asp243, and Gln244 each coordinate glycerol. ADP-binding residues include Thr265 and Gly308. The ATP site is built by Thr265, Gly308, Gln312, and Gly411. Residue Gly411 coordinates ADP.

The protein belongs to the FGGY kinase family.

The catalysed reaction is glycerol + ATP = sn-glycerol 3-phosphate + ADP + H(+). Its pathway is polyol metabolism; glycerol degradation via glycerol kinase pathway; sn-glycerol 3-phosphate from glycerol: step 1/1. With respect to regulation, inhibited by fructose 1,6-bisphosphate (FBP). In terms of biological role, key enzyme in the regulation of glycerol uptake and metabolism. Catalyzes the phosphorylation of glycerol to yield sn-glycerol 3-phosphate. In Xanthobacter autotrophicus (strain ATCC BAA-1158 / Py2), this protein is Glycerol kinase.